The chain runs to 90 residues: Exodeoxyribonuclease 7 small subunit (90 aa).

The disordered stretch occupies residues 62–90 (QDGQANPMSSQGHTAGEYPDDEAEEAEEA). Polar residues predominate over residues 64–74 (GQANPMSSQGH). The segment covering 79–90 (YPDDEAEEAEEA) has biased composition (acidic residues).

This sequence belongs to the XseB family. In terms of assembly, heterooligomer composed of large and small subunits.

The protein resides in the cytoplasm. It catalyses the reaction Exonucleolytic cleavage in either 5'- to 3'- or 3'- to 5'-direction to yield nucleoside 5'-phosphates.. Its function is as follows. Bidirectionally degrades single-stranded DNA into large acid-insoluble oligonucleotides, which are then degraded further into small acid-soluble oligonucleotides. The polypeptide is Exodeoxyribonuclease 7 small subunit (Desulfovibrio desulfuricans (strain ATCC 27774 / DSM 6949 / MB)).